The sequence spans 164 residues: Dynein regulatory complex protein 8 (164 aa).

2 consecutive EF-hand domains span residues 16 to 51 (ELHKKIKDAFEVFDHESNNTVDVREIGTIIRSLGCC) and 94 to 129 (AAEDILLRAFEVLDPAKRGFLTKDELVKYMTEEGEP).

It belongs to the DRC8 family. Component of the nexin-dynein regulatory complex (N-DRC).

The protein resides in the cytoplasm. It localises to the cytoskeleton. Its subcellular location is the flagellum axoneme. Component of the nexin-dynein regulatory complex (N-DRC), a key regulator of ciliary/flagellar motility which maintains the alignment and integrity of the distal axoneme and regulates microtubule sliding in motile axonemes. This is Dynein regulatory complex protein 8 (Efcab2) from Mus musculus (Mouse).